The primary structure comprises 844 residues: Meiotically up-regulated gene 61 protein (844 aa).

2 disordered regions span residues 333–354 (ENNS…PQSQ) and 384–415 (NFGL…EISS). Polar residues predominate over residues 384–394 (NFGLEASNTST). A compositionally biased stretch (basic and acidic residues) spans 395–407 (PEKKKFDSQKPDD). Residues 459 to 479 (VVNSLWLVLLVVPLLGFVGFW) traverse the membrane as a helical segment. 605 to 612 (AKNLNGKS) lines the ATP pocket. The helical transmembrane segment at 705–725 (VISCWRIYLLIGILAAITGTV) threads the bilayer.

As to quaternary structure, interacts with sad1.

It is found in the endoplasmic reticulum membrane. The protein resides in the nucleus membrane. Functionally, required for correct meiotic chromosome segregation. The protein is Meiotically up-regulated gene 61 protein (mug61) of Schizosaccharomyces pombe (strain 972 / ATCC 24843) (Fission yeast).